The following is a 346-amino-acid chain: L-threonine 3-dehydrogenase (346 aa).

Cys42 is a Zn(2+) binding site. Residues Thr44 and His47 each act as charge relay system in the active site. Residues His67, Glu68, Cys97, Cys100, Cys103, and Cys111 each contribute to the Zn(2+) site. Residues Ile179, Asp199, Arg204, 266–268 (LSL), and 291–292 (IT) each bind NAD(+).

It belongs to the zinc-containing alcohol dehydrogenase family. Homotetramer. Zn(2+) is required as a cofactor.

It is found in the cytoplasm. The catalysed reaction is L-threonine + NAD(+) = (2S)-2-amino-3-oxobutanoate + NADH + H(+). Its pathway is amino-acid degradation; L-threonine degradation via oxydo-reductase pathway; glycine from L-threonine: step 1/2. Functionally, catalyzes the NAD(+)-dependent oxidation of L-threonine to 2-amino-3-ketobutyrate. This is L-threonine 3-dehydrogenase from Bacillus licheniformis (strain ATCC 14580 / DSM 13 / JCM 2505 / CCUG 7422 / NBRC 12200 / NCIMB 9375 / NCTC 10341 / NRRL NRS-1264 / Gibson 46).